The chain runs to 335 residues: Glycerol-3-phosphate dehydrogenase [NAD(P)+] (335 aa).

Residues Ser-12, Trp-13, His-33, Arg-34, and Lys-108 each contribute to the NADPH site. Sn-glycerol 3-phosphate contacts are provided by Lys-108, Gly-137, and Thr-139. Ala-141 lines the NADPH pocket. 5 residues coordinate sn-glycerol 3-phosphate: Lys-192, Asp-245, Ser-255, Arg-256, and Asn-257. The active-site Proton acceptor is Lys-192. An NADPH-binding site is contributed by Arg-256. Glu-282 contributes to the NADPH binding site.

Belongs to the NAD-dependent glycerol-3-phosphate dehydrogenase family.

Its subcellular location is the cytoplasm. The catalysed reaction is sn-glycerol 3-phosphate + NAD(+) = dihydroxyacetone phosphate + NADH + H(+). It catalyses the reaction sn-glycerol 3-phosphate + NADP(+) = dihydroxyacetone phosphate + NADPH + H(+). The protein operates within membrane lipid metabolism; glycerophospholipid metabolism. Its function is as follows. Catalyzes the reduction of the glycolytic intermediate dihydroxyacetone phosphate (DHAP) to sn-glycerol 3-phosphate (G3P), the key precursor for phospholipid synthesis. The polypeptide is Glycerol-3-phosphate dehydrogenase [NAD(P)+] (Methylococcus capsulatus (strain ATCC 33009 / NCIMB 11132 / Bath)).